The following is a 449-amino-acid chain: MLLRLIVLLIFMSPVVFATLWFSDNVGSVQVEWLGWHVDSNMPVLLAVILVVFLIFSALSRLSALVADLPSKLGKSRQARGLEKGMSALLAALDAAESGDVGEGRRFAAEAARLLNNPGLAARLDRLLPRPPAQPVAPTRLEAAKGRLFARKPGPPPPPTPVVDKIQPVVVEKLAAAPAGPSREDLEAFSAKIRAGEWGAAQAWIGEAVLAGRLTPLVAARWRSVALEGQALEASPGDPARPLRLAREAMAADQTFLPPALHVIRAEVSEGRKAEAETLLASVWPHVPARVLLDACAPLWRDEDQDACLKRLEALAAIAPHHPDGHLAAGEAAFAVQKWGVARRHIMAALKIAPDALGCRLMAEIEEREPGGSARSAEIWRRREHEASLSPAWVCGACARVVEAWAACCPSCAGVATIEWTRSVKAEEALLPPATTASSMETPRLFRST.

The signal sequence occupies residues 1 to 18 (MLLRLIVLLIFMSPVVFA). The chain crosses the membrane as a helical span at residues 40–60 (SNMPVLLAVILVVFLIFSALS). A TPR repeat occupies 323-356 (PDGHLAAGEAAFAVQKWGVARRHIMAALKIAPDA).

The protein localises to the magnetosome membrane. In terms of biological role, overexpression in wild-type cells increases the number of cells with double magnetosome chains significantly. The 4 genes of this operon collectively influence magnetosome size and number. The polypeptide is Probable magnetosome protein Mms48 (Magnetospirillum gryphiswaldense (strain DSM 6361 / JCM 21280 / NBRC 15271 / MSR-1)).